We begin with the raw amino-acid sequence, 266 residues long: 2-dehydro-3-deoxy-D-gluconate/2-dehydro-3-deoxy-phosphogluconate aldolase (266 aa).

Substrate is bound by residues 36 to 37 (ST), 123 to 125 (YNI), and 151 to 153 (KDS). Catalysis depends on Lys-151, which acts as the Schiff-base intermediate with substrate.

This sequence belongs to the DapA family. KDPG aldolase subfamily. In terms of assembly, homotetramer; dimer of dimers.

The enzyme catalyses 2-dehydro-3-deoxy-6-phospho-D-gluconate = D-glyceraldehyde 3-phosphate + pyruvate. The catalysed reaction is 2-dehydro-3-deoxy-D-gluconate = D-glyceraldehyde + pyruvate. It carries out the reaction 2-dehydro-3-deoxy-6-phospho-D-galactonate = D-glyceraldehyde 3-phosphate + pyruvate. It catalyses the reaction 2-dehydro-3-deoxy-D-galactonate = D-glyceraldehyde + pyruvate. The protein operates within carbohydrate acid metabolism; 2-dehydro-3-deoxy-D-gluconate degradation; D-glyceraldehyde 3-phosphate and pyruvate from 2-dehydro-3-deoxy-D-gluconate: step 2/2. Involved in the degradation of glucose via the Entner-Doudoroff pathway. Catalyzes the reversible cleavage of 2-keto-3-deoxy-6-phosphogluconate (KDPG) and 2-keto-3-deoxygluconate (KDG) forming pyruvate and glyceraldehyde 3-phosphate or glyceraldehyde, respectively. It is also able to catalyze the reversible cleavage of 2-keto-3-deoxy-6-phosphogalactonate (KDPGal) and 2-keto-3-deoxygalactonate (KDGal). It is equally active with both D- and L-glyceraldehyde. In Picrophilus torridus (strain ATCC 700027 / DSM 9790 / JCM 10055 / NBRC 100828 / KAW 2/3), this protein is 2-dehydro-3-deoxy-D-gluconate/2-dehydro-3-deoxy-phosphogluconate aldolase.